We begin with the raw amino-acid sequence, 286 residues long: ATP synthase gamma chain (286 aa).

It belongs to the ATPase gamma chain family. F-type ATPases have 2 components, CF(1) - the catalytic core - and CF(0) - the membrane proton channel. CF(1) has five subunits: alpha(3), beta(3), gamma(1), delta(1), epsilon(1). CF(0) has three main subunits: a, b and c.

Its subcellular location is the cell inner membrane. Functionally, produces ATP from ADP in the presence of a proton gradient across the membrane. The gamma chain is believed to be important in regulating ATPase activity and the flow of protons through the CF(0) complex. This chain is ATP synthase gamma chain, found in Pseudoalteromonas atlantica (strain T6c / ATCC BAA-1087).